The primary structure comprises 690 residues: Elongation factor G (690 aa).

The tr-type G domain maps to 8–283 (SKCRNIGIMA…AVVDFLPAPN (276 aa)). GTP-binding positions include 17-24 (AHIDAGKT), 81-85 (DTPGH), and 135-138 (NKMD).

This sequence belongs to the TRAFAC class translation factor GTPase superfamily. Classic translation factor GTPase family. EF-G/EF-2 subfamily.

It localises to the cytoplasm. Catalyzes the GTP-dependent ribosomal translocation step during translation elongation. During this step, the ribosome changes from the pre-translocational (PRE) to the post-translocational (POST) state as the newly formed A-site-bound peptidyl-tRNA and P-site-bound deacylated tRNA move to the P and E sites, respectively. Catalyzes the coordinated movement of the two tRNA molecules, the mRNA and conformational changes in the ribosome. This chain is Elongation factor G, found in Ehrlichia chaffeensis (strain ATCC CRL-10679 / Arkansas).